Here is a 115-residue protein sequence, read N- to C-terminus: Protein V2 (115 aa).

This sequence belongs to the geminiviridae protein AV2/V2 family. As to quaternary structure, interacts with host SGS3.

Its subcellular location is the host cytoplasm. The protein localises to the host perinuclear region. Functionally, through its interaction with host SGS3, acts as a suppressor of RNA-mediated gene silencing, also known as post-transcriptional gene silencing (PTGS), a mechanism of plant viral defense that limits the accumulation of viral RNAs. The polypeptide is Protein V2 (Cynanchum acutum (Little mallow)).